Consider the following 670-residue polypeptide: DEAD-box ATP-dependent RNA helicase 16 (670 aa).

The segment covering 1-10 has biased composition (low complexity); it reads MAAAAAASSM. The segment at 1–97 is disordered; sequence MAAAAAASSM…EEREVSFDEL (97 aa). 2 stretches are compositionally biased toward basic and acidic residues: residues 18–30 and 40–49; these read AATE…HDEA and NDGHTAHAAE. Residues 92–120 carry the Q motif motif; that stretch reads VSFDELGLDEQLKRALRKKGLDKATPIQR. Residues 123–306 enclose the Helicase ATP-binding domain; the sequence is IPLILEGKDV…KLLLHNPFIL (184 aa). 136–143 provides a ligand contact to ATP; that stretch reads AKTGSGKT. The short motif at 254–257 is the DEAD box element; it reads DEAD. The 184-residue stretch at 340-523 folds into the Helicase C-terminal domain; it reads LVLLKLELIQ…PFPLLTKNAV (184 aa). A disordered region spans residues 616–670; it reads DIDKPRRRKRMGFKGGSGRSSDPLKTFSAEGKSRRRGRKERDGEQDRRKRKKVES. Residues 654–670 show a composition bias toward basic and acidic residues; it reads KERDGEQDRRKRKKVES.

The protein belongs to the DEAD box helicase family. DDX56/DBP9 subfamily.

The enzyme catalyses ATP + H2O = ADP + phosphate + H(+). This is DEAD-box ATP-dependent RNA helicase 16 from Oryza sativa subsp. japonica (Rice).